A 485-amino-acid chain; its full sequence is E3 ubiquitin-protein ligase rnf8 (485 aa).

An FHA domain is found at 43–97 (VSVGRGLNVTHQILSSSCPLMISRIHCVFKLNEGRQWTVTDNKSLNGVWVNGKRI). The tract at residues 150–232 (AASLSQKLKN…SSTCSDSSQH (83 aa)) is disordered. The span at 199 to 219 (GERRETLKLSSRPLEEDRDKA) shows a compositional bias: basic and acidic residues. Low complexity predominate over residues 221 to 230 (SSSSTCSDSS). The segment at 392–430 (CSICSELFIEAVTLNCAHSFCQHCISEWRNRKDKCPMCW) adopts an RING-type zinc-finger fold.

Belongs to the RNF8 family. Homodimer. Forms a E2-E3 ubiquitin ligase complex composed of the rnf8 homodimer and a E2 heterodimer of ube2n and ube2v2.

Its subcellular location is the nucleus. The catalysed reaction is S-ubiquitinyl-[E2 ubiquitin-conjugating enzyme]-L-cysteine + [acceptor protein]-L-lysine = [E2 ubiquitin-conjugating enzyme]-L-cysteine + N(6)-ubiquitinyl-[acceptor protein]-L-lysine.. It functions in the pathway protein modification; protein ubiquitination. Its function is as follows. E3 ubiquitin-protein ligase that plays a key role in DNA damage signaling via 2 distinct roles: by mediating the 'Lys-63'-linked ubiquitination of histones H2A and H2AX and promoting the recruitment of DNA repair proteins at double-strand breaks (DSBs) sites, and by catalyzing 'Lys-48'-linked ubiquitination to remove target proteins from DNA damage sites. Following DNA DSBs, it is recruited to the sites of damage by ATM-phosphorylated mdc1 and catalyzes the 'Lys-63'-linked ubiquitination of histones H2A and H2AX. H2A ubiquitination also mediates the ATM-dependent transcriptional silencing at regions flanking DSBs in cis, a mechanism to avoid collision between transcription and repair intermediates. Also catalyzes the formation of 'Lys-48'-linked polyubiquitin chains, leading to degradation of substrate proteins. In addition to its function in damage signaling, also plays a role in higher-order chromatin structure by mediating extensive chromatin decondensation. The polypeptide is E3 ubiquitin-protein ligase rnf8 (Danio rerio (Zebrafish)).